We begin with the raw amino-acid sequence, 217 residues long: Adenylate kinase (217 aa).

Position 10-15 (10-15 (GAGKGT)) interacts with ATP. Residues 30-59 (STGDIFRSNIKNGTELGRKAKEYIDKGLLV) are NMP. AMP contacts are provided by residues Thr31, Arg36, 57-59 (LLV), 85-88 (GFPR), and Gln92. Positions 126 to 163 (GRRVCSKCGMSYHIVYNQPKVENICDSCNGELIQRDDD) are LID. Arg127 is an ATP binding site. 2 residues coordinate Zn(2+): Cys130 and Cys133. An ATP-binding site is contributed by 136 to 137 (SY). Residues Cys150 and Cys153 each coordinate Zn(2+). Arg160 and Arg171 together coordinate AMP. Position 199 (Glu199) interacts with ATP.

This sequence belongs to the adenylate kinase family. As to quaternary structure, monomer.

Its subcellular location is the cytoplasm. It catalyses the reaction AMP + ATP = 2 ADP. It functions in the pathway purine metabolism; AMP biosynthesis via salvage pathway; AMP from ADP: step 1/1. Catalyzes the reversible transfer of the terminal phosphate group between ATP and AMP. Plays an important role in cellular energy homeostasis and in adenine nucleotide metabolism. The protein is Adenylate kinase of Acetivibrio thermocellus (strain ATCC 27405 / DSM 1237 / JCM 9322 / NBRC 103400 / NCIMB 10682 / NRRL B-4536 / VPI 7372) (Clostridium thermocellum).